A 450-amino-acid polypeptide reads, in one-letter code: Signal recognition particle protein (450 aa).

Residues 107–114, 190–194, and 248–251 each bind GTP; these read GLQGVGKT, DTAGR, and TKTD.

Belongs to the GTP-binding SRP family. SRP54 subfamily. As to quaternary structure, part of the signal recognition particle protein translocation system, which is composed of SRP and FtsY. SRP is a ribonucleoprotein composed of Ffh and a 4.5S RNA molecule.

Its subcellular location is the cytoplasm. It catalyses the reaction GTP + H2O = GDP + phosphate + H(+). Its function is as follows. Involved in targeting and insertion of nascent membrane proteins into the cytoplasmic membrane. Binds to the hydrophobic signal sequence of the ribosome-nascent chain (RNC) as it emerges from the ribosomes. The SRP-RNC complex is then targeted to the cytoplasmic membrane where it interacts with the SRP receptor FtsY. Interaction with FtsY leads to the transfer of the RNC complex to the Sec translocase for insertion into the membrane, the hydrolysis of GTP by both Ffh and FtsY, and the dissociation of the SRP-FtsY complex into the individual components. This Buchnera aphidicola subsp. Schizaphis graminum (strain Sg) protein is Signal recognition particle protein.